Reading from the N-terminus, the 283-residue chain is 4-diphosphocytidyl-2-C-methyl-D-erythritol kinase (283 aa).

Residue Lys-10 is part of the active site. 99 to 109 contributes to the ATP binding site; that stretch reads PMGGGLGGGSS. Residue Asp-141 is part of the active site.

Belongs to the GHMP kinase family. IspE subfamily. As to quaternary structure, homodimer.

The catalysed reaction is 4-CDP-2-C-methyl-D-erythritol + ATP = 4-CDP-2-C-methyl-D-erythritol 2-phosphate + ADP + H(+). It functions in the pathway isoprenoid biosynthesis; isopentenyl diphosphate biosynthesis via DXP pathway; isopentenyl diphosphate from 1-deoxy-D-xylulose 5-phosphate: step 3/6. Its function is as follows. Catalyzes the phosphorylation of the position 2 hydroxy group of 4-diphosphocytidyl-2C-methyl-D-erythritol. The chain is 4-diphosphocytidyl-2-C-methyl-D-erythritol kinase from Salmonella gallinarum (strain 287/91 / NCTC 13346).